The sequence spans 276 residues: Secretagogin (276 aa).

6 EF-hand domains span residues 12-47, 58-93, 105-140, 149-184, 197-232, and 240-276; these read LDAACFWQIWQRFDKEEKGYIRETELDAFFDHLLAK, NVQKVKEQLMTSHNVSKEGRILMKELASMFLSEDEN, DNSVEFMQIWRKYDADSSGFISAAELCNFLRDLFLH, ELEEYTSTMMKIFDKNKDGRLDLNDLARILALQENF, ERKRDFEKIFAHYDVSKTGALEGPEVDGFVKDMMEL, and VDLDKFREILLRHCDVNKDGKIQKSELALCLGLKINP. Residues Asp-25, Tyr-31, Glu-36, Ser-73, Glu-75, Arg-77, Glu-82, Asp-118, Asp-120, Ser-122, Glu-129, Asp-162, Asn-164, Asp-166, Arg-168, Asp-173, Asp-210, Ser-212, Thr-214, Glu-221, Asp-254, Asn-256, Asp-258, Lys-260, and Glu-265 each coordinate Ca(2+).

The protein resides in the cytoplasm. It is found in the secreted. Its subcellular location is the cytoplasmic vesicle. The protein localises to the secretory vesicle membrane. The polypeptide is Secretagogin (Scgn) (Mus musculus (Mouse)).